The chain runs to 619 residues: Sodium-dependent dopamine transporter (619 aa).

Residues 1 to 56 lie on the Cytoplasmic side of the membrane; sequence MSKSKCSVGPMSSVVAPAKESNAVGPREVELILVKEQNGVQLTNSTLINPPQTPVE. A discontinuously helical transmembrane segment spans residues 57–95; that stretch reads AQERETWSKKIDFLLSVIGFAVDLANVWRFPYLCYKNGG. Na(+) contacts are provided by Gly75, Ala77, Val78, Asp79, and Asn82. Asp79 is a dopamine binding site. The next 2 helical transmembrane spans lie at 96 to 127 and 128 to 171; these read GAFL…NREG and AAGV…FSSF. Positions 149 and 153 each coordinate dopamine. The Extracellular segment spans residues 172 to 235; the sequence is TMDLPWIHCN…SRGIDDLGPP (64 aa). A disulfide bond links Cys180 and Cys189. Asn181, Asn188, Asn196, and Asn204 each carry an N-linked (GlcNAc...) asparagine glycan. Transmembrane regions (helical) follow at residues 236 to 255 and 256 to 286; these read RWQL…FSLW and KGVK…GVTL. Residues 287 to 305 are Extracellular-facing; it reads PGAMDGIRAYLSVDFYRLC. The discontinuously helical transmembrane segment at 306–334 threads the bilayer; it reads EASVWIDAATQVCFSLGVGFGVLIAFSSY. Gln316 is a chloride binding site. Residue Phe319 coordinates dopamine. Na(+) contacts are provided by Ser320 and Asn352. Ser320 serves as a coordination point for chloride. Residues 335 to 375 form a helical membrane-spanning segment; that stretch reads NKFTNNCYRDAIITTSINSLTSFSSGFVVFSFLGYMAQKHN. Position 356 (Ser356) interacts with chloride. Topologically, residues 376-399 are extracellular; that stretch reads VPIRDVATDGPGLIFIIYPEAIAT. 3 helical membrane-spanning segments follow: residues 400–441, 442–465, and 466–498; these read LPLS…QLLH, RHRE…CVTN, and GGIY…AWFY. Na(+) contacts are provided by Leu417, Asp420, and Ser421. Dopamine contacts are provided by Ser421 and Ala422. Residues 499–515 are Cytoplasmic-facing; it reads GVQQFSDDIKQMTGQRP. A helical membrane pass occupies residues 516-541; that stretch reads NLYWRLCWKLVSPCFLLYVVVVSIVT. The Extracellular segment spans residues 542–552; sequence FRPPHYGAYIF. The chain crosses the membrane as a helical span at residues 553–582; the sequence is PDWANALGWIIATSSMAMVPIYATYKFCSL. Residues 560 to 589 form an interaction with TGFB1I1 region; the sequence is GWIIATSSMAMVPIYATYKFCSLPGSFREK. The Cytoplasmic portion of the chain corresponds to 583-619; that stretch reads PGSFREKLAYAITPEKDHQLVDRGEVRQFTLRHWLLL.

It belongs to the sodium:neurotransmitter symporter (SNF) (TC 2.A.22) family. SLC6A3 subfamily. As to quaternary structure, monomer. Homooligomer; disulfide-linked. Interacts with PRKCABP and TGFB1I1. Interacts (via N-terminus) with SYNGR3 (via N-terminus). Interacts with SLC18A2. Interacts with TOR1A (ATP-bound); TOR1A regulates SLC6A3 subcellular location. Interacts with alpha-synuclein/SNCA. Interacts with SEPTIN4. In terms of tissue distribution, brain. Expressed in the substantia nigra and ventral tegmental area, regions that contain dopaminergic cell bodies.

It is found in the cell membrane. It localises to the cell projection. Its subcellular location is the neuron projection. The protein localises to the axon. It carries out the reaction dopamine(out) + chloride(out) + Na(+)(out) = dopamine(in) + chloride(in) + Na(+)(in). The enzyme catalyses (R)-noradrenaline(out) + chloride(out) + Na(+)(out) = (R)-noradrenaline(in) + chloride(in) + Na(+)(in). It catalyses the reaction dopamine(out) + chloride(out) + 2 Na(+)(out) = dopamine(in) + chloride(in) + 2 Na(+)(in). With respect to regulation, inhibited by mazindol, cocaine, desipramine, GBR 12783 dihydrochloride, GBR 12909 dihydrochloride and nomifensine. Inhibited by zinc ions. In terms of biological role, mediates sodium- and chloride-dependent transport of dopamine. Also mediates sodium- and chloride-dependent transport of norepinephrine (also known as noradrenaline). Regulator of light-dependent retinal hyaloid vessel regression, downstream of OPN5 signaling. This Rattus norvegicus (Rat) protein is Sodium-dependent dopamine transporter (Slc6a3).